A 454-amino-acid polypeptide reads, in one-letter code: Tumor necrosis factor receptor superfamily member 1A (454 aa).

The signal sequence occupies residues 1–29; sequence MGLPTVPGLLLSLVLLALLMGIHPSGVTG. Over 30 to 212 the chain is Extracellular; sequence LVPSLGDREK…VTNPQDSGTA (183 aa). TNFR-Cys repeat units lie at residues 43-82, 83-125, 126-166, and 167-196; these read LCPQGKYVHSKNNSICCTKCHKGTYLVSDCPSPGRDTVCR, ECEK…DTVC, GCKE…NTVC, and NCHAGFFLRESECVPCSHCKKNEECMKLCL. Intrachain disulfides connect Cys44/Cys58, Cys59/Cys72, Cys62/Cys81, Cys84/Cys99, Cys102/Cys117, Cys105/Cys125, Cys127/Cys143, Cys146/Cys158, Cys149/Cys166, Cys168/Cys179, Cys182/Cys195, and Cys185/Cys191. N-linked (GlcNAc...) asparagine glycosylation occurs at Asn54. N-linked (GlcNAc...) asparagine glycosylation occurs at Asn151. The N-linked (GlcNAc...) asparagine glycan is linked to Asn202. A helical transmembrane segment spans residues 213–235; sequence VLLPLVILLGLCLLSFIFISLMC. The Cytoplasmic segment spans residues 236–454; sequence RYPRWRPEVY…APSSTTRLPR (219 aa). The N-SMase activation domain (NSD) stretch occupies residues 339-349; it reads VQKWEDSAHPQ. One can recognise a Death domain in the interval 356-441; that stretch reads LAILYAVVDG…GCLENILEAL (86 aa). Arg376 carries a (Microbial infection) N-beta-linked (GlcNAc) arginine glycan.

Binding of TNF to the extracellular domain leads to homotrimerization. The aggregated death domains provide a novel molecular interface that interacts specifically with the death domain of TRADD. Various TRADD-interacting proteins such as TRAFS, RIPK1 and possibly FADD, are recruited to the complex by their association with TRADD. This complex activates at least two distinct signaling cascades, apoptosis and NF-kappa-B signaling. Interacts with BAG4, BABAM2, FEM1B, GRB2, SQSTM1 and TRPC4AP. Interacts with DAB2IP. Interacts directly with NOL3 (via CARD domain); inhibits TNF-signaling pathway. Interacts with SH3RF2, TRADD and RIPK1. SH3RF2 facilitates the recruitment of RIPK1 and TRADD to TNFRSF1A in a TNF-alpha-dependent process. Interacts with PGLYRP1; this interaction is important for cell death induction. Interacts (via death domain) with MADD (via death domain). Post-translationally, (Microbial infection) Glycosylated at Arg-376 by S.typhimurium protein Ssek3: arginine GlcNAcylation prevents homotypic/heterotypic death domain interactions.

It localises to the cell membrane. Its subcellular location is the golgi apparatus membrane. Receptor for TNFSF2/TNF-alpha and homotrimeric TNFSF1/lymphotoxin-alpha. The adapter molecule FADD recruits caspase-8 to the activated receptor. The resulting death-inducing signaling complex (DISC) performs caspase-8 proteolytic activation which initiates the subsequent cascade of caspases (aspartate-specific cysteine proteases) mediating apoptosis. The sequence is that of Tumor necrosis factor receptor superfamily member 1A (Tnfrsf1a) from Mus musculus (Mouse).